Consider the following 69-residue polypeptide: Small ribosomal subunit protein bS21 (69 aa).

The tract at residues 49 to 69 (IESAKRKAEKKKRLFSKKDKA) is disordered.

Belongs to the bacterial ribosomal protein bS21 family.

This Leptospira borgpetersenii serovar Hardjo-bovis (strain JB197) protein is Small ribosomal subunit protein bS21.